A 155-amino-acid polypeptide reads, in one-letter code: MAEGEITTFTALTERFGLPLGNYKKPKLLYCSNGGHFLRILPDGKVDGTRDRSDQHIQLQLSAEDVGEVYIKSTASGQYLAMDTNGLLYGSQLPGEECLFLERLEENHYNTYISKKHADKNWFVGLKKNGNSKLGPRTHYGQKAILFLPLPVSAD.

Residues 1–15 constitute a propeptide that is removed on maturation; that stretch reads MAEGEITTFTALTER. Asparagine 33 contacts heparin. The segment at 127-143 is heparin-binding; it reads KKNGNSKLGPRTHYGQK.

Belongs to the heparin-binding growth factors family.

Its subcellular location is the secreted. It localises to the cytoplasm. It is found in the cell cortex. The protein localises to the cytosol. The protein resides in the nucleus. In terms of biological role, plays an important role in the regulation of cell survival, cell division, angiogenesis, cell differentiation and cell migration. Functions as a potent mitogen in vitro. Acts as a ligand for FGFR1 and integrins. Binds to FGFR1 in the presence of heparin leading to FGFR1 dimerization and activation via sequential autophosphorylation on tyrosine residues which act as docking sites for interacting proteins, leading to the activation of several signaling cascades. Binds to integrins. Its binding to integrins and subsequent ternary complex formation with integrins and FGFR1 are essential for FGF1 signaling. This is Fibroblast growth factor 1 (FGF1) from Gallus gallus (Chicken).